Here is a 341-residue protein sequence, read N- to C-terminus: O(6)-methylguanine-induced apoptosis 2 (341 aa).

Over residues 1–10 (MSQKFANTGS) the composition is skewed to polar residues. Positions 1-23 (MSQKFANTGSFIEREDLGKPNKG) are disordered. Basic and acidic residues predominate over residues 12–23 (IEREDLGKPNKG). STPGR repeat units follow at residues 73 to 80 (PGPGFYNV), 115 to 123 (PAANAYTIR), 154 to 160 (PAPNHYN), 194 to 213 (GPAPGHYDVNESLVRESPKV), 232 to 254 (GPGPGYYNPNDQTKILRKSHLPK), 273 to 284 (LPGPGQYEIVNY), and 313 to 323 (LPGPASYKPEI). Y78 carries the post-translational modification Phosphotyrosine.

This sequence belongs to the STPG1 family.

It is found in the cytoplasm. The protein localises to the nucleus. Functionally, may positively contribute to the induction of apoptosis triggered by O(6)-methylguanine. The protein is O(6)-methylguanine-induced apoptosis 2 (Stpg1) of Rattus norvegicus (Rat).